Consider the following 362-residue polypeptide: Chorismate synthase (362 aa).

R46 provides a ligand contact to NADP(+). Residues 122 to 124 (RSS), 238 to 239 (NA), G278, 293 to 297 (KPTPS), and R319 each bind FMN.

Belongs to the chorismate synthase family. Homotetramer. Requires FMNH2 as cofactor.

It carries out the reaction 5-O-(1-carboxyvinyl)-3-phosphoshikimate = chorismate + phosphate. It participates in metabolic intermediate biosynthesis; chorismate biosynthesis; chorismate from D-erythrose 4-phosphate and phosphoenolpyruvate: step 7/7. In terms of biological role, catalyzes the anti-1,4-elimination of the C-3 phosphate and the C-6 proR hydrogen from 5-enolpyruvylshikimate-3-phosphate (EPSP) to yield chorismate, which is the branch point compound that serves as the starting substrate for the three terminal pathways of aromatic amino acid biosynthesis. This reaction introduces a second double bond into the aromatic ring system. This chain is Chorismate synthase, found in Campylobacter jejuni subsp. jejuni serotype O:6 (strain 81116 / NCTC 11828).